The sequence spans 314 residues: Ribosomal RNA small subunit methyltransferase H (314 aa).

S-adenosyl-L-methionine is bound by residues 33–35 (GGH), Asp-52, Phe-84, Asp-105, and Gln-112.

The protein belongs to the methyltransferase superfamily. RsmH family.

Its subcellular location is the cytoplasm. The catalysed reaction is cytidine(1402) in 16S rRNA + S-adenosyl-L-methionine = N(4)-methylcytidine(1402) in 16S rRNA + S-adenosyl-L-homocysteine + H(+). Functionally, specifically methylates the N4 position of cytidine in position 1402 (C1402) of 16S rRNA. This chain is Ribosomal RNA small subunit methyltransferase H, found in Lactobacillus delbrueckii subsp. bulgaricus (strain ATCC 11842 / DSM 20081 / BCRC 10696 / JCM 1002 / NBRC 13953 / NCIMB 11778 / NCTC 12712 / WDCM 00102 / Lb 14).